Reading from the N-terminus, the 692-residue chain is Peroxisomal primary amine oxidase (692 aa).

Positions 1-22 (MERLRQIASQATAASAAPARPA) are enriched in low complexity. The tract at residues 1–26 (MERLRQIASQATAASAAPARPAHPLD) is disordered. An N-linked (GlcNAc...) asparagine glycan is attached at Asn-243. 317–328 (ALDIGEYGAGYM) provides a ligand contact to substrate. The active-site Proton acceptor is the Asp-319. Cys-338 and Cys-364 are joined by a disulfide. 402 to 407 (AANYEY) lines the substrate pocket. The active-site Schiff-base intermediate with substrate; via topaquinone is Tyr-405. At Tyr-405 the chain carries 2',4',5'-topaquinone. Residues His-456 and His-458 each contribute to the Cu cation site. Mn(2+)-binding residues include Asp-465, Asp-613, and Ile-614. Position 624 (His-624) interacts with Cu cation.

Belongs to the copper/topaquinone oxidase family. As to quaternary structure, homodimer. The cofactor is Cu cation. Zn(2+) serves as cofactor. It depends on L-topaquinone as a cofactor. Requires Mn(2+) as cofactor. Topaquinone (TPQ) is generated by copper-dependent autoxidation of a specific tyrosyl residue.

The protein localises to the peroxisome. It catalyses the reaction a primary methyl amine + O2 + H2O = an aldehyde + H2O2 + NH4(+). The chain is Peroxisomal primary amine oxidase (AMO) from Pichia angusta (Yeast).